The primary structure comprises 37 residues: Large ribosomal subunit protein bL36c (37 aa).

It belongs to the bacterial ribosomal protein bL36 family.

Its subcellular location is the plastid. The protein resides in the chloroplast. The protein is Large ribosomal subunit protein bL36c of Lepidium virginicum (Virginia pepperweed).